Consider the following 361-residue polypeptide: Mitogen-activated protein kinase 14A (361 aa).

The Protein kinase domain occupies 25-309 (YQNLSPVGSG…AAEALAHPYF (285 aa)). ATP contacts are provided by residues 31-39 (VGSGAYGTV) and lysine 54. Catalysis depends on aspartate 151, which acts as the Proton acceptor. The residue at position 181 (threonine 181) is a Phosphothreonine; by MAP2K6. The short motif at 181-183 (TGY) is the TXY element. A Phosphotyrosine; by MAP2K6 modification is found at tyrosine 183.

It belongs to the protein kinase superfamily. CMGC Ser/Thr protein kinase family. MAP kinase subfamily. Requires Mg(2+) as cofactor. Dually phosphorylated on Thr-181 and Tyr-183, which activates the enzyme. As to expression, exclusively expressed in the ovary.

It localises to the cytoplasm. The protein localises to the nucleus. It catalyses the reaction L-seryl-[protein] + ATP = O-phospho-L-seryl-[protein] + ADP + H(+). The catalysed reaction is L-threonyl-[protein] + ATP = O-phospho-L-threonyl-[protein] + ADP + H(+). Activated by threonine and tyrosine phosphorylation by the dual specificity kinase, MKK6. Its function is as follows. Serine/threonine kinase which acts as an essential component of the MAP kinase signal transduction pathway. Mapk14a is one of the four p38 MAPKs which play an important role in the cascades of cellular responses evoked by extracellular stimuli such as pro-inflammatory cytokines or physical stress leading to direct activation of transcription factors. Accordingly, p38 MAPKs phosphorylate a broad range of proteins and it has been estimated that they may have approximately 200 to 300 substrates each. Some of the targets are downstream kinases which are activated through phosphorylation and further phosphorylate additional targets. The polypeptide is Mitogen-activated protein kinase 14A (mapk14a) (Cyprinus carpio (Common carp)).